Consider the following 718-residue polypeptide: Polyphosphate kinase (718 aa).

N47 is an ATP binding site. Residues R372 and R402 each coordinate Mg(2+). Residue H432 is the Phosphohistidine intermediate of the active site. 3 residues coordinate ATP: Y465, R561, and H589. The interval 683-718 (KADHGDTTPTSNAHQFIPMMSPKNEPDASDLDREDD) is disordered. Acidic residues predominate over residues 709–718 (DASDLDREDD).

This sequence belongs to the polyphosphate kinase 1 (PPK1) family. The cofactor is Mg(2+). Post-translationally, an intermediate of this reaction is the autophosphorylated ppk in which a phosphate is covalently linked to a histidine residue through a N-P bond.

It carries out the reaction [phosphate](n) + ATP = [phosphate](n+1) + ADP. Its function is as follows. Catalyzes the reversible transfer of the terminal phosphate of ATP to form a long-chain polyphosphate (polyP). This chain is Polyphosphate kinase, found in Lactiplantibacillus plantarum (strain ATCC BAA-793 / NCIMB 8826 / WCFS1) (Lactobacillus plantarum).